The sequence spans 147 residues: Large ribosomal subunit protein uL15 (147 aa).

Residues 1–46 (MSIRLENLSYTPGARKEKHRKGRGHAAGKGKQAGRGQSGQKKRSTV) form a disordered region. Positions 16–28 (KEKHRKGRGHAAG) are enriched in basic residues.

This sequence belongs to the universal ribosomal protein uL15 family. In terms of assembly, part of the 50S ribosomal subunit.

Its function is as follows. Binds to the 23S rRNA. The sequence is that of Large ribosomal subunit protein uL15 from Mesomycoplasma hyopneumoniae (strain 7448) (Mycoplasma hyopneumoniae).